A 340-amino-acid polypeptide reads, in one-letter code: Delta-aminolevulinic acid dehydratase (340 aa).

Zn(2+) contacts are provided by Cys-134, Cys-136, and Cys-144. Lys-211 (schiff-base intermediate with substrate) is an active-site residue. Residues Arg-221 and Arg-233 each contribute to the 5-aminolevulinate site. Catalysis depends on Lys-264, which acts as the Schiff-base intermediate with substrate. 2 residues coordinate 5-aminolevulinate: Ser-291 and Tyr-330.

This sequence belongs to the ALAD family. In terms of assembly, homooctamer. The cofactor is Zn(2+).

The catalysed reaction is 2 5-aminolevulinate = porphobilinogen + 2 H2O + H(+). Its pathway is porphyrin-containing compound metabolism; protoporphyrin-IX biosynthesis; coproporphyrinogen-III from 5-aminolevulinate: step 1/4. Catalyzes an early step in the biosynthesis of tetrapyrroles. Binds two molecules of 5-aminolevulinate per subunit, each at a distinct site, and catalyzes their condensation to form porphobilinogen. This chain is Delta-aminolevulinic acid dehydratase (HEM2), found in Eremothecium gossypii (strain ATCC 10895 / CBS 109.51 / FGSC 9923 / NRRL Y-1056) (Yeast).